The primary structure comprises 212 residues: Lipid A acyltransferase PagP (212 aa).

Residues 1 to 26 form the signal peptide; it reads MSSTYFHSSLLAATLFSVTLTAPAFA. Positions 29–44 are enriched in low complexity; that stretch reads NTQNTPQTITTKKPQP. Residues 29–50 are disordered; sequence NTQNTPQTITTKKPQPAENTFS. Catalysis depends on residues histidine 84, aspartate 127, and serine 128.

Belongs to the lipid A palmitoyltransferase family. In terms of assembly, homodimer.

The protein resides in the cell outer membrane. It catalyses the reaction a lipid A + a 1,2-diacyl-sn-glycero-3-phosphocholine = a hepta-acyl lipid A + a 2-acyl-sn-glycero-3-phosphocholine. It carries out the reaction a lipid IVA + a 1,2-diacyl-sn-glycero-3-phosphocholine = a lipid IVB + a 2-acyl-sn-glycero-3-phosphocholine. The catalysed reaction is a lipid IIA + a 1,2-diacyl-sn-glycero-3-phosphocholine = a lipid IIB + a 2-acyl-sn-glycero-3-phosphocholine. In terms of biological role, transfers a fatty acid residue from the sn-1 position of a phospholipid to the N-linked hydroxyfatty acid chain on the proximal unit of lipid A or its precursors. The polypeptide is Lipid A acyltransferase PagP (Proteus mirabilis (strain HI4320)).